The following is a 486-amino-acid chain: Cardiolipin synthase A (486 aa).

A run of 2 helical transmembrane segments spans residues 3–23 (TFYT…IAGV) and 38–58 (MAWL…YLSF). 2 consecutive PLD phosphodiesterase domains span residues 219 to 246 (MDLR…VDPR) and 399 to 426 (EGGL…DMRS). Active-site residues include histidine 224, lysine 226, aspartate 231, histidine 404, lysine 406, and aspartate 411.

Belongs to the phospholipase D family. Cardiolipin synthase subfamily. ClsA sub-subfamily.

Its subcellular location is the cell inner membrane. The catalysed reaction is 2 a 1,2-diacyl-sn-glycero-3-phospho-(1'-sn-glycerol) = a cardiolipin + glycerol. Its function is as follows. Catalyzes the reversible phosphatidyl group transfer from one phosphatidylglycerol molecule to another to form cardiolipin (CL) (diphosphatidylglycerol) and glycerol. This is Cardiolipin synthase A from Yersinia pseudotuberculosis serotype O:3 (strain YPIII).